The following is a 249-amino-acid chain: Ubiquinone/menaquinone biosynthesis C-methyltransferase UbiE (249 aa).

Residues threonine 72, aspartate 93, and 121–122 each bind S-adenosyl-L-methionine; that span reads DA.

It belongs to the class I-like SAM-binding methyltransferase superfamily. MenG/UbiE family.

The enzyme catalyses a 2-demethylmenaquinol + S-adenosyl-L-methionine = a menaquinol + S-adenosyl-L-homocysteine + H(+). It catalyses the reaction a 2-methoxy-6-(all-trans-polyprenyl)benzene-1,4-diol + S-adenosyl-L-methionine = a 5-methoxy-2-methyl-3-(all-trans-polyprenyl)benzene-1,4-diol + S-adenosyl-L-homocysteine + H(+). The protein operates within quinol/quinone metabolism; menaquinone biosynthesis; menaquinol from 1,4-dihydroxy-2-naphthoate: step 2/2. It functions in the pathway cofactor biosynthesis; ubiquinone biosynthesis. In terms of biological role, methyltransferase required for the conversion of demethylmenaquinol (DMKH2) to menaquinol (MKH2) and the conversion of 2-polyprenyl-6-methoxy-1,4-benzoquinol (DDMQH2) to 2-polyprenyl-3-methyl-6-methoxy-1,4-benzoquinol (DMQH2). This chain is Ubiquinone/menaquinone biosynthesis C-methyltransferase UbiE, found in Saccharophagus degradans (strain 2-40 / ATCC 43961 / DSM 17024).